The following is a 1027-amino-acid chain: Pro-apoptotic serine protease nma111 (1027 aa).

Positions 1 to 46 are disordered; the sequence is MDLNGDAGAKRKRSSIVPAERPAKHLKPESSALTPGDSTPANGTVY. The span at 31-42 shows a compositional bias: polar residues; it reads SALTPGDSTPAN. Residues 81 to 265 are serine protease; the sequence is VVSIHFCQTC…AATDYFLPLD (185 aa). Catalysis depends on charge relay system residues His119, Asp150, and Ser232. 2 consecutive PDZ domains span residues 288–373 and 875–956; these read QWIL…LLVQ and VFCG…VTFD. Residues 991 to 1027 are disordered; it reads HNKSKHKDGIAPDAANLNPDAMEQGYDGASDIEPEAE.

This sequence belongs to the peptidase S1C family.

The protein localises to the nucleus. Its function is as follows. Nuclear serine protease which mediates apoptosis. This is Pro-apoptotic serine protease nma111 (nma111) from Aspergillus oryzae (strain ATCC 42149 / RIB 40) (Yellow koji mold).